Reading from the N-terminus, the 503-residue chain is uncharacterized protein (503 aa).

Transmembrane regions (helical) follow at residues 20-40 (FIAF…VLTM), 43-63 (LGPF…GVML), 106-126 (VSLT…LSFA), 138-158 (LIGL…ISLF), 166-186 (AILF…ILGI), 215-235 (VIST…LTAI), 249-269 (LLMF…ISGI), 301-321 (YLGI…SLAS), 359-379 (VWAS…VPFL), 405-425 (LAVL…FMIL), 443-463 (GVSF…ITAW), and 468-488 (TFKL…FIHS).

This sequence to M.genitalium MG225.

It is found in the cell membrane. This is an uncharacterized protein from Mycoplasma pneumoniae (strain ATCC 29342 / M129 / Subtype 1) (Mycoplasmoides pneumoniae).